A 1395-amino-acid polypeptide reads, in one-letter code: Adventurous-gliding motility protein Z (1395 aa).

One can recognise a Response regulatory domain in the interval 4 to 122 (RVLIVESEHD…ELAALSHGIV (119 aa)). Position 48 is a 4-aspartylphosphate (Asp48). Disordered stretches follow at residues 137–172 (LNGT…AMTE), 874–893 (AAES…GLRS), 919–947 (EQHA…ARAH), 1212–1249 (AAES…AAKQ), 1287–1312 (RYKS…EDDE), and 1326–1395 (AAAA…ELDK). Residues 213–911 (EGKIQILRDE…LEQTHGQLAA (699 aa)) are a coiled coil. Composition is skewed to basic and acidic residues over residues 919-928 (EQHAHQESRK) and 1228-1249 (QKER…AAKQ). 2 stretches are compositionally biased toward low complexity: residues 1291 to 1306 (KSAT…AKPA) and 1326 to 1352 (AAAA…KKAP). The span at 1382-1395 (EDDDWTALVDELDK) shows a compositional bias: acidic residues.

As to quaternary structure, interacts with MglA.

The protein resides in the cytoplasm. Functionally, required for adventurous-gliding motility (A motility), in response to environmental signals sensed by the frz chemosensory system. Forms ordered clusters that span the cell length and that remain stationary relative to the surface across which the cells move, serving as anchor points (focal, transient adhesion sites) that allow the bacterium to move forward. Clusters disassemble at the lagging cell pole. This chain is Adventurous-gliding motility protein Z (aglZ), found in Myxococcus xanthus (strain DK1622).